The sequence spans 311 residues: Solute carrier family 25 member 36 (311 aa).

Solcar repeat units follow at residues 4–108, 116–203, and 224–308; these read RDTL…CKEK, DSTQ…IKQK, and SDFV…VVYL. The next 6 membrane-spanning stretches (helical) occupy residues 7-27, 41-57, 111-131, 180-200, 226-246, and 291-311; these read LVHL…TCPL, LYIS…ASVN, GVFD…AGFT, MSAS…YESI, FVRM…IAYP, and QIPN…LLNG.

This sequence belongs to the mitochondrial carrier (TC 2.A.29) family.

It localises to the mitochondrion inner membrane. It catalyses the reaction UTP(in) + CTP(out) = UTP(out) + CTP(in). The catalysed reaction is CTP(out) + UDP(in) = CTP(in) + UDP(out). It carries out the reaction UMP(in) + CTP(out) = UMP(out) + CTP(in). The enzyme catalyses dUTP(in) + CTP(out) = dUTP(out) + CTP(in). It catalyses the reaction dUMP(in) + CTP(out) = dUMP(out) + CTP(in). The catalysed reaction is CDP(in) + CTP(out) = CDP(out) + CTP(in). It carries out the reaction CTP(out) + CMP(in) = CTP(in) + CMP(out). The enzyme catalyses dCTP(in) + CTP(out) = dCTP(out) + CTP(in). It catalyses the reaction dCDP(in) + CTP(out) = dCDP(out) + CTP(in). The catalysed reaction is dCMP(in) + CTP(out) = dCMP(out) + CTP(in). It carries out the reaction GTP(in) + CTP(out) = GTP(out) + CTP(in). The enzyme catalyses CTP(out) + GDP(in) = CTP(in) + GDP(out). It catalyses the reaction GMP(in) + CTP(out) = GMP(out) + CTP(in). The catalysed reaction is dGTP(in) + CTP(out) = dGTP(out) + CTP(in). It carries out the reaction dGMP(in) + CTP(out) = dGMP(out) + CTP(in). The enzyme catalyses ITP(in) + CTP(out) = ITP(out) + CTP(in). It catalyses the reaction IDP(in) + CTP(out) = IDP(out) + CTP(in). The catalysed reaction is IMP(in) + CTP(out) = IMP(out) + CTP(in). It carries out the reaction CTP(out) = CTP(in). Mitochondrial transporter that imports/exports pyrimidine nucleotides into and from mitochondria. Selectively transports cytosine, guanosine, inosine and uridine (deoxy)nucleoside mono-, di-, and triphosphates by antiport mechanism. Catalyzes uniport at much lower rate. May import (deoxy)nucleoside triphosphates in exchange for intramitochondrial (deoxy)nucleoside mono- and diphosphates, thus providing precursors necessary for de novo synthesis of mitochondrial DNA and RNA while exporting products of their catabolism. Participates in mitochondrial genome maintenance, regulation of mitochondrial membrane potential and mitochondrial respiration. The protein is Solute carrier family 25 member 36 (Slc25a36) of Mus musculus (Mouse).